The primary structure comprises 625 residues: MNAAVVRRTQEALGKVIRRPPLTEKLLNKPPFRYLHDIITEVIRITGFMKGLYTDAEMKSENVKDKDAKISFLQKAIDVVMMVSGEPLAAKPARIVAGHEPERTNELLQLIGKCCLSKLSSDEAVKRVLAGDKGDSRGRAQRTSKAQEPNNKSGKEEESRIHKEDKRSSEAKERSASAEHKQKEELKEDSKPREKERDKEKAKEADRDRHRDPDRDRNRDGEREKARARAKDRDRNNRDRDREAERDRERDRRSEGGKEKERVKDRDRDRDKGRDRERRKSKNGEHTRDPDREKSRDADKPEKKSSSSGEISRKLSDGSFKDVKAEMEADISVGASRSSTLKPSKRRSKHSLEGDSPSDAEVEAGPAGQDKPEVMENAEVPSELPSSLRRIPRPGSARPAPPRVKRQESTETLVVDRSGSGKTVSSVIIDSQNSDNEDDEQFVVEAAPQLSEIADIDMVPSGELEDEEKHGGLVKKILETKKDYEKLQQSLKPGEKERSLIFESAWKKEKDIVSKEIEKLRVSIQTLCKSALPLGKIMDYIQEDVDAMQNELQLWHSENRQHAEALSQEQSITDSAVEPLKAELSELEQQIRDQQDKICAVKANILKNEEKIQKMVHSINLSSRR.

Positions Met1–Asp322 are abolishes microtubules binding when missing. Positions Ala130–Asp439 are disordered. The segment covering Gln141–Lys152 has biased composition (polar residues). Residues Ser153–Met327 show a composition bias toward basic and acidic residues. Residues Arg229–Arg625 form a DISC1-interaction domain region. Residues Ser316 and Ser409 each carry the phosphoserine modification. Residues Ser420–Ser434 are compositionally biased toward polar residues. The stretch at Gly472–Ala600 forms a coiled coil.

Belongs to the TRAF3IP1 family. Interacts with IL13RA1. Binds to microtubules, TRAF3 and DISC1. Component of the IFT complex B, at least composed of IFT20, IFT22, IFT25, IFT27, IFT46, IFT52, TRAF3IP1/IFT54, IFT57, IFT74, IFT80, IFT81, and IFT88. Interacts with IFT88. Interacts with MAP4.

It localises to the cytoplasm. The protein resides in the cytoskeleton. The protein localises to the cell projection. It is found in the cilium. Its subcellular location is the cilium axoneme. It localises to the cilium basal body. Functionally, plays an inhibitory role on IL13 signaling by binding to IL13RA1. Involved in suppression of IL13-induced STAT6 phosphorylation, transcriptional activity and DNA-binding. Recruits TRAF3 and DISC1 to the microtubules. Involved in epithelial morphogenesis and in the regulation of microtubule cytoskeleton organization. Is a negative regulator of microtubule stability, acting through the control of MAP4 levels. Involved in ciliogenesis. The sequence is that of TRAF3-interacting protein 1 (Traf3ip1) from Mus musculus (Mouse).